The chain runs to 211 residues: FMN-dependent NADH:quinone oxidoreductase 2 (211 aa).

Residues S10 and 17-19 (SRS) each bind FMN.

Belongs to the azoreductase type 1 family. Homodimer. The cofactor is FMN.

It carries out the reaction 2 a quinone + NADH + H(+) = 2 a 1,4-benzosemiquinone + NAD(+). It catalyses the reaction N,N-dimethyl-1,4-phenylenediamine + anthranilate + 2 NAD(+) = 2-(4-dimethylaminophenyl)diazenylbenzoate + 2 NADH + 2 H(+). In terms of biological role, quinone reductase that provides resistance to thiol-specific stress caused by electrophilic quinones. Its function is as follows. Also exhibits azoreductase activity. Catalyzes the reductive cleavage of the azo bond in aromatic azo compounds to the corresponding amines. The sequence is that of FMN-dependent NADH:quinone oxidoreductase 2 from Listeria monocytogenes serotype 4b (strain F2365).